Consider the following 120-residue polypeptide: Ribosome-binding factor A (120 aa).

It belongs to the RbfA family. As to quaternary structure, monomer. Binds 30S ribosomal subunits, but not 50S ribosomal subunits or 70S ribosomes.

Its subcellular location is the cytoplasm. In terms of biological role, one of several proteins that assist in the late maturation steps of the functional core of the 30S ribosomal subunit. Associates with free 30S ribosomal subunits (but not with 30S subunits that are part of 70S ribosomes or polysomes). Required for efficient processing of 16S rRNA. May interact with the 5'-terminal helix region of 16S rRNA. In Chlamydia abortus (strain DSM 27085 / S26/3) (Chlamydophila abortus), this protein is Ribosome-binding factor A.